The primary structure comprises 101 residues: Large ribosomal subunit protein uL23 (101 aa).

The protein belongs to the universal ribosomal protein uL23 family. In terms of assembly, part of the 50S ribosomal subunit. Contacts protein L29, and trigger factor when it is bound to the ribosome.

Its function is as follows. One of the early assembly proteins it binds 23S rRNA. One of the proteins that surrounds the polypeptide exit tunnel on the outside of the ribosome. Forms the main docking site for trigger factor binding to the ribosome. In Paenarthrobacter aurescens (strain TC1), this protein is Large ribosomal subunit protein uL23.